Reading from the N-terminus, the 154-residue chain is 6,7-dimethyl-8-ribityllumazine synthase (154 aa).

Residues Phe-22, 56–58, and 80–82 each bind 5-amino-6-(D-ribitylamino)uracil; these read AFE and AVI. Residue 85-86 participates in (2S)-2-hydroxy-3-oxobutyl phosphate binding; that stretch reads AT. His-88 serves as the catalytic Proton donor. Phe-113 is a 5-amino-6-(D-ribitylamino)uracil binding site. (2S)-2-hydroxy-3-oxobutyl phosphate is bound at residue Arg-127.

It belongs to the DMRL synthase family. Forms an icosahedral capsid composed of 60 subunits, arranged as a dodecamer of pentamers.

The catalysed reaction is (2S)-2-hydroxy-3-oxobutyl phosphate + 5-amino-6-(D-ribitylamino)uracil = 6,7-dimethyl-8-(1-D-ribityl)lumazine + phosphate + 2 H2O + H(+). It functions in the pathway cofactor biosynthesis; riboflavin biosynthesis; riboflavin from 2-hydroxy-3-oxobutyl phosphate and 5-amino-6-(D-ribitylamino)uracil: step 1/2. Its function is as follows. Catalyzes the formation of 6,7-dimethyl-8-ribityllumazine by condensation of 5-amino-6-(D-ribitylamino)uracil with 3,4-dihydroxy-2-butanone 4-phosphate. This is the penultimate step in the biosynthesis of riboflavin. This Geobacillus sp. (strain WCH70) protein is 6,7-dimethyl-8-ribityllumazine synthase.